The primary structure comprises 215 residues: uncharacterized protein (215 aa).

The S-adenosyl-L-methionine site is built by Gly53, Glu74, and Asp97.

It belongs to the methyltransferase superfamily. YrrT family.

Could be a S-adenosyl-L-methionine-dependent methyltransferase. This is an uncharacterized protein from Geobacillus thermodenitrificans (strain NG80-2).